The sequence spans 286 residues: Pantothenate synthetase (286 aa).

30–37 (MGNLHRGH) serves as a coordination point for ATP. H37 functions as the Proton donor in the catalytic mechanism. Q61 provides a ligand contact to (R)-pantoate. Position 61 (Q61) interacts with beta-alanine. 149-152 (GEKD) is a binding site for ATP. Position 155 (Q155) interacts with (R)-pantoate. ATP-binding positions include V178 and 186-189 (LSSR).

The protein belongs to the pantothenate synthetase family. Homodimer.

The protein resides in the cytoplasm. The catalysed reaction is (R)-pantoate + beta-alanine + ATP = (R)-pantothenate + AMP + diphosphate + H(+). The protein operates within cofactor biosynthesis; (R)-pantothenate biosynthesis; (R)-pantothenate from (R)-pantoate and beta-alanine: step 1/1. Functionally, catalyzes the condensation of pantoate with beta-alanine in an ATP-dependent reaction via a pantoyl-adenylate intermediate. The chain is Pantothenate synthetase from Nitrosococcus oceani (strain ATCC 19707 / BCRC 17464 / JCM 30415 / NCIMB 11848 / C-107).